The sequence spans 105 residues: UPF0235 protein A1G_07140 (105 aa).

Belongs to the UPF0235 family.

This is UPF0235 protein A1G_07140 from Rickettsia rickettsii (strain Sheila Smith).